Consider the following 189-residue polypeptide: Peptidyl-tRNA hydrolase (189 aa).

Histidine 15 is a tRNA binding site. Histidine 20 functions as the Proton acceptor in the catalytic mechanism. The tRNA site is built by phenylalanine 66, asparagine 68, and asparagine 114.

The protein belongs to the PTH family. In terms of assembly, monomer.

It localises to the cytoplasm. It carries out the reaction an N-acyl-L-alpha-aminoacyl-tRNA + H2O = an N-acyl-L-amino acid + a tRNA + H(+). In terms of biological role, hydrolyzes ribosome-free peptidyl-tRNAs (with 1 or more amino acids incorporated), which drop off the ribosome during protein synthesis, or as a result of ribosome stalling. Catalyzes the release of premature peptidyl moieties from peptidyl-tRNA molecules trapped in stalled 50S ribosomal subunits, and thus maintains levels of free tRNAs and 50S ribosomes. In Streptococcus equi subsp. equi (strain 4047), this protein is Peptidyl-tRNA hydrolase.